We begin with the raw amino-acid sequence, 743 residues long: Elongation factor 2 (743 aa).

The tr-type G domain maps to 19–265 (NNIRNIGIIA…MVVRHLPSPK (247 aa)). GTP is bound by residues 28 to 35 (AHIHHGKT), 94 to 98 (DTPGH), and 148 to 151 (NKVD). Position 615 is a diphthamide (histidine 615).

Belongs to the TRAFAC class translation factor GTPase superfamily. Classic translation factor GTPase family. EF-G/EF-2 subfamily.

The protein resides in the cytoplasm. Catalyzes the GTP-dependent ribosomal translocation step during translation elongation. During this step, the ribosome changes from the pre-translocational (PRE) to the post-translocational (POST) state as the newly formed A-site-bound peptidyl-tRNA and P-site-bound deacylated tRNA move to the P and E sites, respectively. Catalyzes the coordinated movement of the two tRNA molecules, the mRNA and conformational changes in the ribosome. The protein is Elongation factor 2 of Nanoarchaeum equitans (strain Kin4-M).